The chain runs to 491 residues: MTAAAESTVALGGRFARELNELAVPWEAEEAPDPKLLVLNGPLAAELGLDPEYLSSEEGVRFLLGNHVPDGATPVAQAYAGHQFGGYSPLLGDGRALLLGELQDSRGRLRDLHLKGSGRTPFARAGDGRAVVGPMLREYIVSEAMHALGIPTTRSLAVVATGRQVRRDDMLPGAVLARVAGSHLRVGSFQYARVTENTELLRRLADHAISRHYPEAAAAENPYLALYRAVVAAQASLVAQWMLVGFVHGVMNTDNMTISGETIDYGPCAFIDAFNPAAVYSSIDVGGRYAYANQPVMAEWNLARLAEAMLPLIDEDQEAAVPVAVEALGGFRRQYSAAWSGGMATKLGLAAGEPEAAAGAEVQDLVDGVTGILKDGSVDYTLFFRNLAKAARGDSRPVRGMVMDLAAYDAWAERWQDLAPDAGLMDRTNPAYIPRNHLVEEALAAATGGDLDPLHRLLEAVSAPYSERPGLERYTQGAPEDFGTYMTFCGT.

ATP contacts are provided by Gly92, Gly94, Arg95, Lys115, Asp127, Gly128, Arg178, and Arg185. Residue Asp254 is the Proton acceptor of the active site. Asn255 and Asp264 together coordinate Mg(2+). Asp264 contacts ATP.

Belongs to the SELO family. Requires Mg(2+) as cofactor. Mn(2+) serves as cofactor.

The enzyme catalyses L-seryl-[protein] + ATP = 3-O-(5'-adenylyl)-L-seryl-[protein] + diphosphate. It carries out the reaction L-threonyl-[protein] + ATP = 3-O-(5'-adenylyl)-L-threonyl-[protein] + diphosphate. The catalysed reaction is L-tyrosyl-[protein] + ATP = O-(5'-adenylyl)-L-tyrosyl-[protein] + diphosphate. It catalyses the reaction L-histidyl-[protein] + UTP = N(tele)-(5'-uridylyl)-L-histidyl-[protein] + diphosphate. The enzyme catalyses L-seryl-[protein] + UTP = O-(5'-uridylyl)-L-seryl-[protein] + diphosphate. It carries out the reaction L-tyrosyl-[protein] + UTP = O-(5'-uridylyl)-L-tyrosyl-[protein] + diphosphate. Nucleotidyltransferase involved in the post-translational modification of proteins. It can catalyze the addition of adenosine monophosphate (AMP) or uridine monophosphate (UMP) to a protein, resulting in modifications known as AMPylation and UMPylation. This chain is Protein nucleotidyltransferase YdiU, found in Pseudarthrobacter chlorophenolicus (strain ATCC 700700 / DSM 12829 / CIP 107037 / JCM 12360 / KCTC 9906 / NCIMB 13794 / A6) (Arthrobacter chlorophenolicus).